The chain runs to 132 residues: Small ribosomal subunit protein uS8 (132 aa).

It belongs to the universal ribosomal protein uS8 family. In terms of assembly, part of the 30S ribosomal subunit. Contacts proteins S5 and S12.

Its function is as follows. One of the primary rRNA binding proteins, it binds directly to 16S rRNA central domain where it helps coordinate assembly of the platform of the 30S subunit. The polypeptide is Small ribosomal subunit protein uS8 (Nocardia farcinica (strain IFM 10152)).